The primary structure comprises 619 residues: 1-deoxy-D-xylulose-5-phosphate synthase (619 aa).

Residues His76 and 117–119 (AHS) contribute to the thiamine diphosphate site. Asp148 is a binding site for Mg(2+). Thiamine diphosphate contacts are provided by residues 149–150 (GA), Asn177, Tyr284, and Glu366. Residue Asn177 coordinates Mg(2+).

This sequence belongs to the transketolase family. DXPS subfamily. As to quaternary structure, homodimer. The cofactor is Mg(2+). It depends on thiamine diphosphate as a cofactor.

It carries out the reaction D-glyceraldehyde 3-phosphate + pyruvate + H(+) = 1-deoxy-D-xylulose 5-phosphate + CO2. It participates in metabolic intermediate biosynthesis; 1-deoxy-D-xylulose 5-phosphate biosynthesis; 1-deoxy-D-xylulose 5-phosphate from D-glyceraldehyde 3-phosphate and pyruvate: step 1/1. Functionally, catalyzes the acyloin condensation reaction between C atoms 2 and 3 of pyruvate and glyceraldehyde 3-phosphate to yield 1-deoxy-D-xylulose-5-phosphate (DXP). This is 1-deoxy-D-xylulose-5-phosphate synthase from Azoarcus sp. (strain BH72).